The chain runs to 380 residues: Cytochrome b (380 aa).

The next 4 membrane-spanning stretches (helical) occupy residues 34–54 (FGSL…LLAM), 78–99 (WLIR…FLHI), 114–134 (WNTG…GYVL), and 179–199 (FFAL…IHLT). Residues H84 and H98 each coordinate heme b. Heme b is bound by residues H183 and H197. An a ubiquinone-binding site is contributed by H202. Transmembrane regions (helical) follow at residues 227-247 (IKDI…ALFS), 289-309 (LGGV…PFLH), 321-341 (LSQT…WIGS), and 348-368 (FIII…ILFP).

The protein belongs to the cytochrome b family. In terms of assembly, the cytochrome bc1 complex contains 11 subunits: 3 respiratory subunits (MT-CYB, CYC1 and UQCRFS1), 2 core proteins (UQCRC1 and UQCRC2) and 6 low-molecular weight proteins (UQCRH/QCR6, UQCRB/QCR7, UQCRQ/QCR8, UQCR10/QCR9, UQCR11/QCR10 and a cleavage product of UQCRFS1). This cytochrome bc1 complex then forms a dimer. The cofactor is heme b.

The protein resides in the mitochondrion inner membrane. Functionally, component of the ubiquinol-cytochrome c reductase complex (complex III or cytochrome b-c1 complex) that is part of the mitochondrial respiratory chain. The b-c1 complex mediates electron transfer from ubiquinol to cytochrome c. Contributes to the generation of a proton gradient across the mitochondrial membrane that is then used for ATP synthesis. The protein is Cytochrome b (MT-CYB) of Alectoris chukar (Chukar partridge).